A 93-amino-acid chain; its full sequence is UPF0223 protein str0998 (93 aa).

This sequence belongs to the UPF0223 family.

This Streptococcus thermophilus (strain CNRZ 1066) protein is UPF0223 protein str0998.